The following is a 476-amino-acid chain: Aspartyl/glutamyl-tRNA(Asn/Gln) amidotransferase subunit B (476 aa).

This sequence belongs to the GatB/GatE family. GatB subfamily. In terms of assembly, heterotrimer of A, B and C subunits.

It carries out the reaction L-glutamyl-tRNA(Gln) + L-glutamine + ATP + H2O = L-glutaminyl-tRNA(Gln) + L-glutamate + ADP + phosphate + H(+). It catalyses the reaction L-aspartyl-tRNA(Asn) + L-glutamine + ATP + H2O = L-asparaginyl-tRNA(Asn) + L-glutamate + ADP + phosphate + 2 H(+). Its function is as follows. Allows the formation of correctly charged Asn-tRNA(Asn) or Gln-tRNA(Gln) through the transamidation of misacylated Asp-tRNA(Asn) or Glu-tRNA(Gln) in organisms which lack either or both of asparaginyl-tRNA or glutaminyl-tRNA synthetases. The reaction takes place in the presence of glutamine and ATP through an activated phospho-Asp-tRNA(Asn) or phospho-Glu-tRNA(Gln). In Bacillus pumilus (strain SAFR-032), this protein is Aspartyl/glutamyl-tRNA(Asn/Gln) amidotransferase subunit B.